Consider the following 256-residue polypeptide: Major prion protein (256 aa).

An N-terminal signal peptide occupies residues 1–24 (MVKSHIGSWILVLFVAMWSDVGLC). Residues 25–233 (KKRPKPGGGW…ESQAYYQRGA (209 aa)) form an interaction with GRB2, ERI3 and SYN1 region. A disordered region spans residues 28-110 (PKPGGGWNTG…QWNKPSKPKT (83 aa)). 5 repeat units span residues 54-62 (PQGGGGWGQ), 63-70 (PHGGGWGQ), 71-78 (PHGGGWGQ), 79-86 (PHGGGWGQ), and 87-95 (PHGGGGWGQ). The 5 X 8 AA tandem repeats of P-H-G-G-G-W-G-Q stretch occupies residues 54-95 (PQGGGGWGQPHGGGWGQPHGGGWGQPHGGGWGQPHGGGGWGQ). A compositionally biased stretch (gly residues) spans 55-97 (QGGGGWGQPHGGGWGQPHGGGWGQPHGGGWGQPHGGGGWGQGG). Cu(2+)-binding residues include His64, Gly65, Gly66, His72, Gly73, Gly74, His80, Gly81, Gly82, His88, Gly90, and Gly91. Cys182 and Cys217 are disulfide-bonded. N-linked (GlcNAc...) asparagine glycans are attached at residues Asn184 and Asn200. Residue Ala233 is the site of GPI-anchor amidated alanine attachment. A propeptide spans 234–256 (SVILFSSPPVILLISFLIFLIVG) (removed in mature form).

This sequence belongs to the prion family. Monomer and homodimer. Has a tendency to aggregate into amyloid fibrils containing a cross-beta spine, formed by a steric zipper of superposed beta-strands. Soluble oligomers may represent an intermediate stage on the path to fibril formation. Copper binding may promote oligomerization. Interacts with GRB2, APP, ERI3/PRNPIP and SYN1. Mislocalized cytosolically exposed PrP interacts with MGRN1; this interaction alters MGRN1 subcellular location and causes lysosomal enlargement. Interacts with KIAA1191.

It localises to the cell membrane. Its subcellular location is the golgi apparatus. Its primary physiological function is unclear. Has cytoprotective activity against internal or environmental stresses. May play a role in neuronal development and synaptic plasticity. May be required for neuronal myelin sheath maintenance. May play a role in iron uptake and iron homeostasis. Soluble oligomers are toxic to cultured neuroblastoma cells and induce apoptosis (in vitro). Association with GPC1 (via its heparan sulfate chains) targets PRNP to lipid rafts. Also provides Cu(2+) or Zn(2+) for the ascorbate-mediated GPC1 deaminase degradation of its heparan sulfate side chains. The protein is Major prion protein (PRNP) of Odocoileus hemionus (Mule deer).